The chain runs to 119 residues: Large ribosomal subunit protein bL20 (119 aa).

It belongs to the bacterial ribosomal protein bL20 family.

Functionally, binds directly to 23S ribosomal RNA and is necessary for the in vitro assembly process of the 50S ribosomal subunit. It is not involved in the protein synthesizing functions of that subunit. The sequence is that of Large ribosomal subunit protein bL20 from Coxiella burnetii (strain CbuK_Q154) (Coxiella burnetii (strain Q154)).